A 158-amino-acid chain; its full sequence is Small ribosomal subunit protein uS9 (158 aa).

Belongs to the universal ribosomal protein uS9 family.

In Brucella abortus (strain S19), this protein is Small ribosomal subunit protein uS9.